The primary structure comprises 251 residues: Adenosylcobinamide-GDP ribazoletransferase (251 aa).

5 consecutive transmembrane segments (helical) span residues 44-64, 114-134, 143-163, 177-197, and 198-218; these read LVGLLAGLVCAGPFLLGLLAG, IGAFGVLGIVFGVLGQVVLAH, GALVWAPVLGRAACVVLAACV, AGATHMTVLFCAGVTAATGVA, and LAGPPAVLAAALPCACAVVWL.

It belongs to the CobS family. Mg(2+) serves as cofactor.

Its subcellular location is the cell inner membrane. It catalyses the reaction alpha-ribazole + adenosylcob(III)inamide-GDP = adenosylcob(III)alamin + GMP + H(+). The enzyme catalyses alpha-ribazole 5'-phosphate + adenosylcob(III)inamide-GDP = adenosylcob(III)alamin 5'-phosphate + GMP + H(+). Its pathway is cofactor biosynthesis; adenosylcobalamin biosynthesis; adenosylcobalamin from cob(II)yrinate a,c-diamide: step 7/7. Its function is as follows. Joins adenosylcobinamide-GDP and alpha-ribazole to generate adenosylcobalamin (Ado-cobalamin). Also synthesizes adenosylcobalamin 5'-phosphate from adenosylcobinamide-GDP and alpha-ribazole 5'-phosphate. The polypeptide is Adenosylcobinamide-GDP ribazoletransferase (Nitratidesulfovibrio vulgaris (strain DSM 19637 / Miyazaki F) (Desulfovibrio vulgaris)).